The primary structure comprises 178 residues: ATP synthase subunit delta (178 aa).

This sequence belongs to the ATPase delta chain family. As to quaternary structure, F-type ATPases have 2 components, F(1) - the catalytic core - and F(0) - the membrane proton channel. F(1) has five subunits: alpha(3), beta(3), gamma(1), delta(1), epsilon(1). F(0) has three main subunits: a(1), b(2) and c(10-14). The alpha and beta chains form an alternating ring which encloses part of the gamma chain. F(1) is attached to F(0) by a central stalk formed by the gamma and epsilon chains, while a peripheral stalk is formed by the delta and b chains.

It is found in the cell inner membrane. F(1)F(0) ATP synthase produces ATP from ADP in the presence of a proton or sodium gradient. F-type ATPases consist of two structural domains, F(1) containing the extramembraneous catalytic core and F(0) containing the membrane proton channel, linked together by a central stalk and a peripheral stalk. During catalysis, ATP synthesis in the catalytic domain of F(1) is coupled via a rotary mechanism of the central stalk subunits to proton translocation. Its function is as follows. This protein is part of the stalk that links CF(0) to CF(1). It either transmits conformational changes from CF(0) to CF(1) or is implicated in proton conduction. The sequence is that of ATP synthase subunit delta from Thioalkalivibrio sulfidiphilus (strain HL-EbGR7).